Reading from the N-terminus, the 109-residue chain is Iron-sulfur cluster assembly protein CyaY (109 aa).

Belongs to the frataxin family.

Its function is as follows. Involved in iron-sulfur (Fe-S) cluster assembly. May act as a regulator of Fe-S biogenesis. The chain is Iron-sulfur cluster assembly protein CyaY from Shewanella putrefaciens (strain CN-32 / ATCC BAA-453).